A 272-amino-acid chain; its full sequence is Regulatory protein RecX (272 aa).

The protein belongs to the RecX family.

Its subcellular location is the cytoplasm. Functionally, modulates RecA activity. The polypeptide is Regulatory protein RecX (Staphylococcus saprophyticus subsp. saprophyticus (strain ATCC 15305 / DSM 20229 / NCIMB 8711 / NCTC 7292 / S-41)).